The primary structure comprises 378 residues: UDP-4-amino-4-deoxy-L-arabinose--oxoglutarate aminotransferase (378 aa).

Lys-182 is subject to N6-(pyridoxal phosphate)lysine.

It belongs to the DegT/DnrJ/EryC1 family. ArnB subfamily. Homodimer. Pyridoxal 5'-phosphate serves as cofactor.

It carries out the reaction UDP-4-amino-4-deoxy-beta-L-arabinose + 2-oxoglutarate = UDP-beta-L-threo-pentopyranos-4-ulose + L-glutamate. Its pathway is nucleotide-sugar biosynthesis; UDP-4-deoxy-4-formamido-beta-L-arabinose biosynthesis; UDP-4-deoxy-4-formamido-beta-L-arabinose from UDP-alpha-D-glucuronate: step 2/3. The protein operates within bacterial outer membrane biogenesis; lipopolysaccharide biosynthesis. Its function is as follows. Catalyzes the conversion of UDP-4-keto-arabinose (UDP-Ara4O) to UDP-4-amino-4-deoxy-L-arabinose (UDP-L-Ara4N). The modified arabinose is attached to lipid A and is required for resistance to polymyxin and cationic antimicrobial peptides. The chain is UDP-4-amino-4-deoxy-L-arabinose--oxoglutarate aminotransferase from Aeromonas salmonicida (strain A449).